We begin with the raw amino-acid sequence, 356 residues long: NADH-quinone oxidoreductase subunit H (356 aa).

A run of 8 helical transmembrane segments spans residues 4-24 (ALIL…LTGV), 79-99 (LLAP…IPFG), 127-147 (GVLY…IAGW), 166-186 (ISYE…TGSL), 198-218 (MWNI…TAMF), 251-271 (FFLA…LLFF), 289-309 (FIGL…FIWV), and 329-349 (MIPW…YWKE).

The protein belongs to the complex I subunit 1 family. NDH-1 is composed of 14 different subunits. Subunits NuoA, H, J, K, L, M, N constitute the membrane sector of the complex.

The protein localises to the cell inner membrane. The catalysed reaction is a quinone + NADH + 5 H(+)(in) = a quinol + NAD(+) + 4 H(+)(out). Its function is as follows. NDH-1 shuttles electrons from NADH, via FMN and iron-sulfur (Fe-S) centers, to quinones in the respiratory chain. The immediate electron acceptor for the enzyme in this species is believed to be ubiquinone. Couples the redox reaction to proton translocation (for every two electrons transferred, four hydrogen ions are translocated across the cytoplasmic membrane), and thus conserves the redox energy in a proton gradient. This subunit may bind ubiquinone. The polypeptide is NADH-quinone oxidoreductase subunit H (Leptospira biflexa serovar Patoc (strain Patoc 1 / ATCC 23582 / Paris)).